A 78-amino-acid polypeptide reads, in one-letter code: MSDTADRVQKIVVEHLGVEADKVNQEASFIDDLGADSLDIVELVMAFEEEFGVEIPDDAAEKISTVGDATKYIEEHKG.

Positions 2–77 (SDTADRVQKI…DATKYIEEHK (76 aa)) constitute a Carrier domain. The residue at position 37 (S37) is an O-(pantetheine 4'-phosphoryl)serine.

Belongs to the acyl carrier protein (ACP) family. 4'-phosphopantetheine is transferred from CoA to a specific serine of apo-ACP by AcpS. This modification is essential for activity because fatty acids are bound in thioester linkage to the sulfhydryl of the prosthetic group.

It localises to the cytoplasm. It functions in the pathway lipid metabolism; fatty acid biosynthesis. Carrier of the growing fatty acid chain in fatty acid biosynthesis. The protein is Acyl carrier protein of Erythrobacter litoralis (strain HTCC2594).